A 65-amino-acid chain; its full sequence is Small ribosomal subunit protein eS27 (65 aa).

Zn(2+) contacts are provided by C20, C23, C39, and C42. Residues 20–42 form a C4-type zinc finger; that stretch reads CIDCGNEQIVFSHPATRVRCLVC.

It belongs to the eukaryotic ribosomal protein eS27 family. Part of the 30S ribosomal subunit. Zn(2+) serves as cofactor.

The chain is Small ribosomal subunit protein eS27 from Pyrococcus horikoshii (strain ATCC 700860 / DSM 12428 / JCM 9974 / NBRC 100139 / OT-3).